Here is a 187-residue protein sequence, read N- to C-terminus: Macro domain-containing protein MM_0177 (187 aa).

In terms of domain architecture, Macro spans valine 8–leucine 187.

It belongs to the MacroD-type family.

This chain is Macro domain-containing protein MM_0177, found in Methanosarcina mazei (strain ATCC BAA-159 / DSM 3647 / Goe1 / Go1 / JCM 11833 / OCM 88) (Methanosarcina frisia).